We begin with the raw amino-acid sequence, 413 residues long: Tyrosine--tRNA ligase 2 (413 aa).

Positions 58–67 (PSAPDVHLGH) match the 'HIGH' region motif. A run of 2 repeats spans residues 89–94 (GDFTGK) and 96–101 (GDPTGK). The segment at 89–101 (GDFTGKIGDPTGK) is 2 X 6 AA tandem repeats. A 'KMSKS' region motif is present at residues 242-246 (KMSKS). Lys245 contacts ATP. One can recognise an S4 RNA-binding domain in the interval 353-413 (IAMIDLLVKL…VGKRKFLKLQ (61 aa)).

It belongs to the class-I aminoacyl-tRNA synthetase family. TyrS type 2 subfamily. Homodimer.

The protein localises to the cytoplasm. The catalysed reaction is tRNA(Tyr) + L-tyrosine + ATP = L-tyrosyl-tRNA(Tyr) + AMP + diphosphate + H(+). Catalyzes the attachment of tyrosine to tRNA(Tyr) in a two-step reaction: tyrosine is first activated by ATP to form Tyr-AMP and then transferred to the acceptor end of tRNA(Tyr). In Bacillus subtilis (strain 168), this protein is Tyrosine--tRNA ligase 2.